A 622-amino-acid polypeptide reads, in one-letter code: Dynein axonemal assembly factor 1 (622 aa).

The interval 1–80 is disordered; the sequence is MHPEVSEPQA…ARNDRDDRGP (80 aa). A compositionally biased stretch (basic and acidic residues) spans 22 to 42; it reads AGDHGRAGPGVRKEEINETKE. Residues 48-59 are compositionally biased toward low complexity; sequence STTSCQSQKQQS. Residues 62–80 are compositionally biased toward basic and acidic residues; it reads SRLDCRSGYARNDRDDRGP. 6 LRR repeats span residues 101–123, 124–145, 146–167, 168–189, 190–211, and 215–236; these read ALND…EEYT, GLRC…QAQS, ELRC…EPLQ, KLDA…SCLP, VLNT…QHLR, and RLCV…SVLE. Residues 249–288 enclose the LRRCT domain; sequence NPVTKHIPNYRRTVTVRLKQLTYLDDRPVFPKDRACAEAW. The segment covering 326-336 has biased composition (basic and acidic residues); that stretch reads EERKKARDKGE. The interval 326–360 is disordered; sequence EERKKARDKGETPLPDSEESSSTSPEAQDKPPLGE. A compositionally biased stretch (low complexity) spans 337–351; it reads TPLPDSEESSSTSPE. Phosphoserine occurs at positions 349, 464, and 487. Disordered stretches follow at residues 481 to 503 and 540 to 622; these read SSLS…EHTP and LETQ…FGLD. A compositionally biased stretch (polar residues) spans 540–550; it reads LETQGQVFSTT.

The protein belongs to the DNAAF1 family.

Its subcellular location is the cell projection. The protein resides in the cilium. Functionally, cilium-specific protein required for the stability of the ciliary architecture. Plays a role in cytoplasmic preassembly of dynein arms. Involved in regulation of microtubule-based cilia and actin-based brush border microvilli. In Peromyscus leucopus (White-footed mouse), this protein is Dynein axonemal assembly factor 1 (Dnaaf1).